A 139-amino-acid chain; its full sequence is Ribosome-binding factor A (139 aa).

The tract at residues 112 to 139 (EARTQGQAAPAPDVEPAPGAAPDDEAEE) is disordered. The segment covering 119–132 (AAPAPDVEPAPGAA) has biased composition (low complexity).

This sequence belongs to the RbfA family. Monomer. Binds 30S ribosomal subunits, but not 50S ribosomal subunits or 70S ribosomes.

It localises to the cytoplasm. One of several proteins that assist in the late maturation steps of the functional core of the 30S ribosomal subunit. Associates with free 30S ribosomal subunits (but not with 30S subunits that are part of 70S ribosomes or polysomes). Required for efficient processing of 16S rRNA. May interact with the 5'-terminal helix region of 16S rRNA. The chain is Ribosome-binding factor A from Anaeromyxobacter dehalogenans (strain 2CP-1 / ATCC BAA-258).